The following is a 96-amino-acid chain: UPF0235 protein VC_0458 (96 aa).

This sequence belongs to the UPF0235 family.

This is UPF0235 protein VC_0458 from Vibrio cholerae serotype O1 (strain ATCC 39315 / El Tor Inaba N16961).